A 434-amino-acid polypeptide reads, in one-letter code: Putative magnesium transporter MRS2-D (434 aa).

Disordered stretches follow at residues 1 to 21 (MAAR…AAGE), 126 to 171 (AASP…DGEA), and 279 to 311 (EASE…AGGG). A compositionally biased stretch (low complexity) spans 9–21 (AAGAGAPAPAAGE). Positions 279–291 (EASELEDHSSRDE) are enriched in basic and acidic residues. The next 2 helical transmembrane spans lie at 367–387 (GILL…TGVF) and 405–425 (FPCA…AALL).

Belongs to the CorA metal ion transporter (MIT) (TC 1.A.35.5) family.

The protein resides in the membrane. Functionally, putative magnesium transporter. This is Putative magnesium transporter MRS2-D (MRS2-D) from Oryza sativa subsp. indica (Rice).